Reading from the N-terminus, the 79-residue chain is MSGLGIMVLTLLLLVFMATSHQDAGEKQATQRDAVNVRRRRSIAGRTTTEECDEYCEDLNKNCCGLSNGEPVCATACLG.

Residues Met-1–Ala-24 form the signal peptide. Residues Gly-25–Arg-46 constitute a propeptide that is removed on maturation. Intrachain disulfides connect Cys-52–Cys-64, Cys-56–Cys-73, and Cys-63–Cys-77. Leu-78 is subject to Leucine amide.

It belongs to the conotoxin O3 superfamily. As to expression, expressed by the venom duct.

It localises to the secreted. In Conus tessulatus (Tessellate cone), this protein is Conotoxin TsMSGL-2.